Reading from the N-terminus, the 73-residue chain is uncharacterized protein (73 aa).

The segment at Met1–Ala32 is disordered.

This is an uncharacterized protein from Frog virus 3 (isolate Goorha) (FV-3).